A 465-amino-acid chain; its full sequence is Siroheme synthase (465 aa).

The tract at residues 1–203 (MDFLPLFHSL…GRPAEAERLL (203 aa)) is precorrin-2 dehydrogenase /sirohydrochlorin ferrochelatase. NAD(+) is bound by residues 22–23 (EV) and 43–44 (PQ). Phosphoserine is present on Ser-128. Residues 217–465 (GEVYLVGAGP…AWFEGAREDA (249 aa)) are uroporphyrinogen-III C-methyltransferase. S-adenosyl-L-methionine is bound at residue Pro-226. Asp-249 serves as the catalytic Proton acceptor. Catalysis depends on Lys-271, which acts as the Proton donor. Residues 302 to 304 (GGD), Ile-307, 332 to 333 (TA), Met-384, and Gly-413 contribute to the S-adenosyl-L-methionine site.

This sequence in the N-terminal section; belongs to the precorrin-2 dehydrogenase / sirohydrochlorin ferrochelatase family. It in the C-terminal section; belongs to the precorrin methyltransferase family.

The enzyme catalyses uroporphyrinogen III + 2 S-adenosyl-L-methionine = precorrin-2 + 2 S-adenosyl-L-homocysteine + H(+). It carries out the reaction precorrin-2 + NAD(+) = sirohydrochlorin + NADH + 2 H(+). It catalyses the reaction siroheme + 2 H(+) = sirohydrochlorin + Fe(2+). It functions in the pathway cofactor biosynthesis; adenosylcobalamin biosynthesis; precorrin-2 from uroporphyrinogen III: step 1/1. Its pathway is cofactor biosynthesis; adenosylcobalamin biosynthesis; sirohydrochlorin from precorrin-2: step 1/1. The protein operates within porphyrin-containing compound metabolism; siroheme biosynthesis; precorrin-2 from uroporphyrinogen III: step 1/1. It participates in porphyrin-containing compound metabolism; siroheme biosynthesis; siroheme from sirohydrochlorin: step 1/1. It functions in the pathway porphyrin-containing compound metabolism; siroheme biosynthesis; sirohydrochlorin from precorrin-2: step 1/1. Functionally, multifunctional enzyme that catalyzes the SAM-dependent methylations of uroporphyrinogen III at position C-2 and C-7 to form precorrin-2 via precorrin-1. Then it catalyzes the NAD-dependent ring dehydrogenation of precorrin-2 to yield sirohydrochlorin. Finally, it catalyzes the ferrochelation of sirohydrochlorin to yield siroheme. This is Siroheme synthase from Pseudomonas aeruginosa (strain LESB58).